Reading from the N-terminus, the 394-residue chain is Flap endonuclease 1 (394 aa).

Positions 1–104 are N-domain; the sequence is MGIKQLFSII…GELAKRFQRK (104 aa). D34 lines the Mg(2+) pocket. R47 and R70 together coordinate DNA. Residues D86, E158, E160, D179, and D181 each coordinate Mg(2+). The segment at 122–253 is I-domain; the sequence is DVEKFSRRTV…STALKLIREH (132 aa). DNA is bound at residue E158. Positions 231 and 233 each coordinate DNA. D233 lines the Mg(2+) pocket. Residues 341–349 are interaction with PCNA; sequence QQARIEGFF. Residues 356–383 are compositionally biased toward basic and acidic residues; that stretch reads EEEKKAHKRKLEEQAEQKRKKVKEEKKE. Residues 356–394 form a disordered region; that stretch reads EEEKKAHKRKLEEQAEQKRKKVKEEKKEKAKLKAKPRGA. The span at 384–394 shows a compositional bias: basic residues; the sequence is KAKLKAKPRGA.

This sequence belongs to the XPG/RAD2 endonuclease family. FEN1 subfamily. Interacts with PCNA. Three molecules of FEN1 bind to one PCNA trimer with each molecule binding to one PCNA monomer. PCNA stimulates the nuclease activity without altering cleavage specificity. It depends on Mg(2+) as a cofactor. Phosphorylated. Phosphorylation upon DNA damage induces relocalization to the nuclear plasma.

It is found in the nucleus. The protein resides in the nucleolus. It localises to the nucleoplasm. Its subcellular location is the mitochondrion. In terms of biological role, structure-specific nuclease with 5'-flap endonuclease and 5'-3' exonuclease activities involved in DNA replication and repair. During DNA replication, cleaves the 5'-overhanging flap structure that is generated by displacement synthesis when DNA polymerase encounters the 5'-end of a downstream Okazaki fragment. It enters the flap from the 5'-end and then tracks to cleave the flap base, leaving a nick for ligation. Also involved in the long patch base excision repair (LP-BER) pathway, by cleaving within the apurinic/apyrimidinic (AP) site-terminated flap. Acts as a genome stabilization factor that prevents flaps from equilibrating into structures that lead to duplications and deletions. Also possesses 5'-3' exonuclease activity on nicked or gapped double-stranded DNA, and exhibits RNase H activity. Also involved in replication and repair of rDNA and in repairing mitochondrial DNA. In Sordaria macrospora (strain ATCC MYA-333 / DSM 997 / K(L3346) / K-hell), this protein is Flap endonuclease 1.